The sequence spans 105 residues: Large ribosomal subunit protein uL24 (105 aa).

Belongs to the universal ribosomal protein uL24 family. As to quaternary structure, part of the 50S ribosomal subunit.

In terms of biological role, one of two assembly initiator proteins, it binds directly to the 5'-end of the 23S rRNA, where it nucleates assembly of the 50S subunit. Its function is as follows. One of the proteins that surrounds the polypeptide exit tunnel on the outside of the subunit. This chain is Large ribosomal subunit protein uL24, found in Staphylococcus aureus (strain Mu3 / ATCC 700698).